The sequence spans 565 residues: Polyadenylate-binding protein 1-A (565 aa).

4 RRM domains span residues 10–88 (SSLY…WSQR), 98–175 (GNVF…PFKS), 188–265 (TNVF…RAQK), and 284–362 (VNLY…LAQR). The segment at 435 to 466 (YARGQPRQNGPRQNGGQPRQNGPRPDVSGAQP) is disordered. Positions 440 to 454 (PRQNGPRQNGGQPRQ) are enriched in polar residues. The region spanning 489–565 (SALNLQSIIN…REALEVLGSN (77 aa)) is the PABC domain.

The protein belongs to the polyadenylate-binding protein type-1 family.

The protein localises to the cytoplasm. It is found in the nucleus. In terms of biological role, binds the poly(A) tail of mRNA. Appears to be an important mediator of the multiple roles of the poly(A) tail in mRNA biogenesis, stability and translation. This Dictyostelium discoideum (Social amoeba) protein is Polyadenylate-binding protein 1-A (pabpc1A).